A 553-amino-acid polypeptide reads, in one-letter code: 5'-nucleotidase domain-containing protein 2 (553 aa).

Positions 26–51 (SSSPSCPGCGPPGPGAHCPSTPRSAP) are disordered. Asp-106 acts as the Nucleophile in catalysis. The Mg(2+) site is built by Asp-106, Asp-108, and Asp-391. Asp-108 serves as the catalytic Proton donor.

It belongs to the 5'(3')-deoxyribonucleotidase family. As to quaternary structure, interacts with tyrosine 3-monooxygenase TH; the interaction results in reduced phosphorylation and decreased catalytic activity of TH. In terms of tissue distribution, expressed in eye iridocorneal angle.

It is found in the cytoplasm. Promotes dephosphorylation of tyrosine 3-monooxygenase TH which decreases TH catalytic activity and leads to reduced synthesis of catecholamines including dopamine, noradrenaline and adrenaline. The exact mechanism of activity is unknown but may act as a phosphatase or promote the activity of phosphatases or may inhibit phosphorylation by acting as a barrier to interfere with protein kinase access. In Rattus norvegicus (Rat), this protein is 5'-nucleotidase domain-containing protein 2 (Nt5dc2).